Here is a 208-residue protein sequence, read N- to C-terminus: FMN-dependent NADH:quinone oxidoreductase 1 (208 aa).

Serine 17 to serine 19 is an FMN binding site.

The protein belongs to the azoreductase type 1 family. In terms of assembly, homodimer. It depends on FMN as a cofactor.

The enzyme catalyses 2 a quinone + NADH + H(+) = 2 a 1,4-benzosemiquinone + NAD(+). It carries out the reaction N,N-dimethyl-1,4-phenylenediamine + anthranilate + 2 NAD(+) = 2-(4-dimethylaminophenyl)diazenylbenzoate + 2 NADH + 2 H(+). Its function is as follows. Quinone reductase that provides resistance to thiol-specific stress caused by electrophilic quinones. Also exhibits azoreductase activity. Catalyzes the reductive cleavage of the azo bond in aromatic azo compounds to the corresponding amines. The chain is FMN-dependent NADH:quinone oxidoreductase 1 from Listeria monocytogenes serotype 4b (strain F2365).